The primary structure comprises 376 residues: Copper-containing nitrite reductase (376 aa).

Positions 1-33 form a signal peptide, tat-type signal; that stretch reads MAEQMQISRRTILAGAALAGALAPVLATTSAWG. Residue Gln34 is modified to Pyrrolidone carboxylic acid. Plastocyanin-like domains lie at 34 to 211 and 212 to 376; these read QGAV…YDKI and YYVG…PSGT. Residues His131, His136, His171, Cys172, His181, Met186, and His342 each coordinate Cu cation.

This sequence belongs to the multicopper oxidase family. As to quaternary structure, homotrimer. Cu(2+) serves as cofactor. The cofactor is Cu(+). It depends on FAD as a cofactor. Predicted to be exported by the Tat system. The position of the signal peptide cleavage has been experimentally proven.

It localises to the periplasm. The enzyme catalyses nitric oxide + Fe(III)-[cytochrome c] + H2O = Fe(II)-[cytochrome c] + nitrite + 2 H(+). The protein operates within nitrogen metabolism; nitrate reduction (denitrification); dinitrogen from nitrate: step 2/4. This is Copper-containing nitrite reductase (nirK) from Alcaligenes faecalis.